Here is a 389-residue protein sequence, read N- to C-terminus: S-adenosylmethionine synthase (389 aa).

His19 is a binding site for ATP. Asp21 provides a ligand contact to Mg(2+). Glu47 provides a ligand contact to K(+). L-methionine-binding residues include Glu60 and Gln103. The segment at 103–113 (QSVDIAQGVDR) is flexible loop. ATP contacts are provided by residues 168-170 (DGK), 234-235 (RF), Asp243, 249-250 (RK), Ala266, and Lys270. Asp243 lines the L-methionine pocket. Lys274 provides a ligand contact to L-methionine.

It belongs to the AdoMet synthase family. In terms of assembly, homotetramer; dimer of dimers. The cofactor is Mg(2+). K(+) is required as a cofactor.

Its subcellular location is the cytoplasm. The enzyme catalyses L-methionine + ATP + H2O = S-adenosyl-L-methionine + phosphate + diphosphate. The protein operates within amino-acid biosynthesis; S-adenosyl-L-methionine biosynthesis; S-adenosyl-L-methionine from L-methionine: step 1/1. Functionally, catalyzes the formation of S-adenosylmethionine (AdoMet) from methionine and ATP. The overall synthetic reaction is composed of two sequential steps, AdoMet formation and the subsequent tripolyphosphate hydrolysis which occurs prior to release of AdoMet from the enzyme. The protein is S-adenosylmethionine synthase of Maridesulfovibrio salexigens (strain ATCC 14822 / DSM 2638 / NCIMB 8403 / VKM B-1763) (Desulfovibrio salexigens).